We begin with the raw amino-acid sequence, 67 residues long: MPKMKTKKSMTRRVKVTATGKVMAFKSGKRHQNTGKSGDEIRGKGKGFVLAKSEWARMKLGLLAKGK.

It belongs to the bacterial ribosomal protein bL35 family.

This chain is Large ribosomal subunit protein bL35, found in Deinococcus geothermalis (strain DSM 11300 / CIP 105573 / AG-3a).